Here is a 279-residue protein sequence, read N- to C-terminus: tRNA-cytidine(32) 2-sulfurtransferase (279 aa).

The PP-loop motif motif lies at 46 to 51 (SGGKDS). Positions 121, 124, and 212 each coordinate [4Fe-4S] cluster.

The protein belongs to the TtcA family. As to quaternary structure, homodimer. Mg(2+) serves as cofactor. Requires [4Fe-4S] cluster as cofactor.

Its subcellular location is the cytoplasm. The enzyme catalyses cytidine(32) in tRNA + S-sulfanyl-L-cysteinyl-[cysteine desulfurase] + AH2 + ATP = 2-thiocytidine(32) in tRNA + L-cysteinyl-[cysteine desulfurase] + A + AMP + diphosphate + H(+). It participates in tRNA modification. Functionally, catalyzes the ATP-dependent 2-thiolation of cytidine in position 32 of tRNA, to form 2-thiocytidine (s(2)C32). The sulfur atoms are provided by the cysteine/cysteine desulfurase (IscS) system. The sequence is that of tRNA-cytidine(32) 2-sulfurtransferase from Marinomonas sp. (strain MWYL1).